Reading from the N-terminus, the 487-residue chain is MQFAFDNSFHADMQGFYAPAEAAKPSAPRLLAFNDALAERLGFDRRGVDADELARVFSGEELPEGAAPIALAYAGHQFGHFSPQLGDGRALLLGEIVAPDGARFDIQLKGSGPTAFSRGGDGKAAIGPVLREFLVSEAMAAMGVPTTRALAAVTTGERVERERAHPGAVLTRVASSHIRVGTFQFFAAHFGADHVVQLSDYSIARHFPDLADAANPHLALLDRVIGLQCALIARWLGVGFIHGVMNTDNVAISGETIDYGPCAFMDRFAANTVFSSIDATGRYAYGRQPQIMHWNMARFAEALLPAIHRVSPADVEAAKALVDAIPGRFRAAWHAQVREKLGLSTSAGDDAELIDRLFDELEKHSVDFTTFFRALAMLLRGEGAMMQALLPAPDAMAPWIADWWQRIEQDAANPLDLADAMDAVNPLYIPRNHRVEAALEAAEAGDPAPWLELLEVVRQPFAARAGRERFAEPAPADAAPYTTFCGT.

ATP contacts are provided by Gly86, Gly88, Arg89, Lys109, Asp121, Gly122, Arg172, and Arg179. Asp248 (proton acceptor) is an active-site residue. Residues Asn249 and Asp258 each contribute to the Mg(2+) site. Asp258 serves as a coordination point for ATP.

This sequence belongs to the SELO family. Mg(2+) is required as a cofactor. Mn(2+) serves as cofactor.

The catalysed reaction is L-seryl-[protein] + ATP = 3-O-(5'-adenylyl)-L-seryl-[protein] + diphosphate. It catalyses the reaction L-threonyl-[protein] + ATP = 3-O-(5'-adenylyl)-L-threonyl-[protein] + diphosphate. The enzyme catalyses L-tyrosyl-[protein] + ATP = O-(5'-adenylyl)-L-tyrosyl-[protein] + diphosphate. It carries out the reaction L-histidyl-[protein] + UTP = N(tele)-(5'-uridylyl)-L-histidyl-[protein] + diphosphate. The catalysed reaction is L-seryl-[protein] + UTP = O-(5'-uridylyl)-L-seryl-[protein] + diphosphate. It catalyses the reaction L-tyrosyl-[protein] + UTP = O-(5'-uridylyl)-L-tyrosyl-[protein] + diphosphate. Its function is as follows. Nucleotidyltransferase involved in the post-translational modification of proteins. It can catalyze the addition of adenosine monophosphate (AMP) or uridine monophosphate (UMP) to a protein, resulting in modifications known as AMPylation and UMPylation. This chain is Protein nucleotidyltransferase YdiU, found in Sphingopyxis alaskensis (strain DSM 13593 / LMG 18877 / RB2256) (Sphingomonas alaskensis).